We begin with the raw amino-acid sequence, 301 residues long: Ribonuclease Z (301 aa).

Zn(2+)-binding residues include histidine 61, histidine 63, aspartate 65, histidine 66, histidine 140, aspartate 211, and histidine 269. The active-site Proton acceptor is aspartate 65.

This sequence belongs to the RNase Z family. Homodimer. The cofactor is Zn(2+).

The catalysed reaction is Endonucleolytic cleavage of RNA, removing extra 3' nucleotides from tRNA precursor, generating 3' termini of tRNAs. A 3'-hydroxy group is left at the tRNA terminus and a 5'-phosphoryl group is left at the trailer molecule.. Functionally, zinc phosphodiesterase, which displays some tRNA 3'-processing endonuclease activity. Probably involved in tRNA maturation, by removing a 3'-trailer from precursor tRNA. This is Ribonuclease Z from Bradyrhizobium sp. (strain ORS 278).